Consider the following 591-residue polypeptide: MSDPKIRTPIVCVMGHVDHGKTSLLDRIRGSSVVASEAGAITQHIGATIVPIEAIRKMSGSMEKIPINIPGLLFIDTPGHHAFTTLRARGGALADMAILVVDISQGFQPQTIEALQILRNCKTPFVIAATKVDRIHGWRINKDESFLSSFGKQNERVKTDIETKTYEIVGKLSDLGFSADRYDRVSDFQRNLAIVPVSAHTGEGIADLLMIMIGLAQRYMGEELKLSAEGPGEGTVLEVKEERGLGTTLDVILYNGTLSVGDEIAMASQDDVVTTKVRSLLKPRPMKEILIEDRFERVKSVVAASGIKVSAPGLEKVIAGSPLFVTRGNMDELAARIRKEMQEIHVNLAEEGIVIKADTIGALEALCKELESKEIKVMRAQVGPVSRHDLIDTETIKNPTFRVLLSFNTPILPDAADMIKDPLYTQVKVFSGQVIYQLIDQYVAWRDEQKRIAEKAQFEHVMMPAKIRLLPDCVFRQSNPAVVGVRVLGGKLRADVDLVKTDGKKIGHLKTMQLRQESIKEADAGLEVAISIEGATVGRQLNVGDDLLVDLPERHVKVLEREMLKNLNISTQEVLAEFVAIRRKAEPFWGK.

The tr-type G domain maps to 6–220 (IRTPIVCVMG…IMIGLAQRYM (215 aa)). Residues 15 to 22 (GHVDHGKT) are G1. 15-22 (GHVDHGKT) is a GTP binding site. The interval 40–44 (AITQH) is G2. The segment at 76 to 79 (DTPG) is G3. GTP contacts are provided by residues 76–80 (DTPGH) and 130–133 (TKVD). Residues 130–133 (TKVD) are G4. The tract at residues 198–200 (SAH) is G5.

This sequence belongs to the TRAFAC class translation factor GTPase superfamily. Classic translation factor GTPase family. IF-2 subfamily.

Function in general translation initiation by promoting the binding of the formylmethionine-tRNA to ribosomes. Seems to function along with eIF-2. The protein is Probable translation initiation factor IF-2 of Methanoregula boonei (strain DSM 21154 / JCM 14090 / 6A8).